The sequence spans 79 residues: MTQINCDKELDTLGLKCPEPVMLVRAAIRKMDVGQVLLIIADDPATTRDIPGFCEFMEHELVGSETEEIPYRYWVRKSH.

The active-site Cysteine persulfide intermediate is C17.

It belongs to the sulfur carrier protein TusA family.

The protein localises to the cytoplasm. In terms of biological role, sulfur carrier protein which probably makes part of a sulfur-relay system. The sequence is that of Sulfur carrier protein TusA from Idiomarina loihiensis (strain ATCC BAA-735 / DSM 15497 / L2-TR).